Here is a 122-residue protein sequence, read N- to C-terminus: Fluoride-specific ion channel FluC (122 aa).

4 helical membrane-spanning segments follow: residues 4 to 24 (ILLI…VSGI), 36 to 56 (LIVN…SLFG), 65 to 85 (FIIT…YESF), and 100 to 120 (ILLN…ASMF). The Na(+) site is built by Gly72 and Thr75.

The protein belongs to the fluoride channel Fluc/FEX (TC 1.A.43) family.

It localises to the cell membrane. It carries out the reaction fluoride(in) = fluoride(out). With respect to regulation, na(+) is not transported, but it plays an essential structural role and its presence is essential for fluoride channel function. Fluoride-specific ion channel. Important for reducing fluoride concentration in the cell, thus reducing its toxicity. This is Fluoride-specific ion channel FluC from Methanococcus maripaludis (strain DSM 14266 / JCM 13030 / NBRC 101832 / S2 / LL).